An 839-amino-acid polypeptide reads, in one-letter code: Katanin p80 WD40 repeat-containing subunit B1 homolog KTN80.3 (839 aa).

7 WD repeats span residues 14 to 54 (AHSA…AILS), 57 to 96 (GHSS…VVRT), 99 to 138 (GHRS…CIHT), 141 to 182 (GHTR…HEFK), 184 to 222 (HEGK…LIGS), 225 to 265 (TETT…DGVD), and 267 to 304 (GWSN…TEPM). The DWD box motif lies at 115 to 131 (FFASGSLDTNLKIWDIR). 4 disordered regions span residues 303-340 (PMSG…LGKL), 357-435 (GKLS…KSAS), 501-561 (LQSK…RTNK), and 575-648 (SLVR…PSNM). Polar residues-rich tracts occupy residues 307–334 (GATQ…NSSK), 375–385 (TGRSSVSQSSD), 411–435 (TLSS…KSAS), 501–533 (LQSK…QSQP), 589–602 (DLIS…SSPT), and 630–648 (VSSS…PSNM).

The protein belongs to the WD repeat KATNB1 family. As to quaternary structure, component of KTN80-KTN1 complexes composed of a hexamer of KTN1-KTN80 heterodimers that sense microtubule (MT) geometry to confer precise MT severing. Interacts directly with AAA1/KTN1 and KTN80.1, and weakly with KTN80.4. Expressed in siliques, flowers, leaves, stems and roots.

The protein resides in the cytoplasm. It is found in the cytoskeleton. Its function is as follows. May participate in a complex which severs microtubules in an ATP-dependent manner. Microtubule severing may promote rapid reorganization of cellular microtubule arrays. Confers precision to microtubule (MT) severing by specific targeting of KTN1 to MT cleavage sites such as crossover or branching nucleation sites. Together with other KTN80s, regulates cell elongation by modulating MT organization. The sequence is that of Katanin p80 WD40 repeat-containing subunit B1 homolog KTN80.3 from Arabidopsis thaliana (Mouse-ear cress).